Consider the following 303-residue polypeptide: Oxygen-dependent coproporphyrinogen-III oxidase (303 aa).

Ser93 lines the substrate pocket. Residues His97 and His107 each contribute to the a divalent metal cation site. His107 (proton donor) is an active-site residue. Residue 109-111 (NVR) coordinates substrate. A divalent metal cation-binding residues include His146 and His176. Residues 241 to 276 (YVEFNLVYDRGTLFGLQSGGRTESILMSLPPQVRWG) form an important for dimerization region. 259–261 (GGR) is a substrate binding site.

Belongs to the aerobic coproporphyrinogen-III oxidase family. In terms of assembly, homodimer. A divalent metal cation is required as a cofactor.

The protein localises to the cytoplasm. The enzyme catalyses coproporphyrinogen III + O2 + 2 H(+) = protoporphyrinogen IX + 2 CO2 + 2 H2O. It functions in the pathway porphyrin-containing compound metabolism; protoporphyrin-IX biosynthesis; protoporphyrinogen-IX from coproporphyrinogen-III (O2 route): step 1/1. Its function is as follows. Involved in the heme biosynthesis. Catalyzes the aerobic oxidative decarboxylation of propionate groups of rings A and B of coproporphyrinogen-III to yield the vinyl groups in protoporphyrinogen-IX. This is Oxygen-dependent coproporphyrinogen-III oxidase from Pseudomonas putida (strain W619).